Consider the following 378-residue polypeptide: Zinc finger protein DPF3 (378 aa).

A Glycyl lysine isopeptide (Lys-Gly) (interchain with G-Cter in SUMO2) cross-link involves residue lysine 99. The tract at residues 145 to 193 (VLENDENVEEGNEEEDLEEDIPKRKNRTRGRARGSAGGRRRHDAASQED) is disordered. Positions 148–163 (NDENVEEGNEEEDLEE) are enriched in acidic residues. Positions 168–186 (RKNRTRGRARGSAGGRRRH) are enriched in basic residues. A C2H2-type zinc finger spans residues 198–221 (YVCDICGKRYKNRPGLSYHYAHTH). The disordered stretch occupies residues 225–254 (EEGDEAQDQETRSPPNHRNENHRPQKGPDG). 2 consecutive PHD-type zinc fingers follow at residues 259–319 (NNYC…CKSC) and 316–366 (CKSC…CWEL). The tract at residues 317 to 332 (KSCILCGTSENDDQLL) is interaction with HDGFL2. Glycine 323 carries the post-translational modification Phosphoserine.

Belongs to the requiem/DPF family. Component of the BAF complex, which includes at least actin (ACTB), ARID1A, ARID1B/BAF250, SMARCA2, SMARCA4/BRG1/BAF190A, ACTL6A/BAF53, ACTL6B/BAF53B, SMARCE1/BAF57, SMARCC1/BAF155, SMARCC2/BAF170, SMARCB1/SNF5/INI1, and one or more of SMARCD1/BAF60A, SMARCD2/BAF60B, or SMARCD3/BAF60C. In muscle cells, the BAF complex also contains DPF3. Interacts with acetylated histones H3 and H4. Component of neuron-specific chromatin remodeling complex (nBAF complex) composed of at least, ARID1A/BAF250A or ARID1B/BAF250B, SMARCD1/BAF60A, SMARCD3/BAF60C, SMARCA2/BRM/BAF190B, SMARCA4/BRG1/BAF190A, SMARCB1/BAF47, SMARCC1/BAF155, SMARCE1/BAF57, SMARCC2/BAF170, DPF1/BAF45B, DPF3/BAF45C, ACTL6B/BAF53B and actin. As to quaternary structure, interacts with HDGFL2, SMARCA4/BRG1/BAF190A, SMARCC1/BAF155 and SMARCD1/BAF60A. Post-translationally, phosphorylation at Ser-323 enhances its interaction with HDGFL2.

Its subcellular location is the nucleus. Its function is as follows. Belongs to the neuron-specific chromatin remodeling complex (nBAF complex). During neural development a switch from a stem/progenitor to a post-mitotic chromatin remodeling mechanism occurs as neurons exit the cell cycle and become committed to their adult state. The transition from proliferating neural stem/progenitor cells to post-mitotic neurons requires a switch in subunit composition of the npBAF and nBAF complexes. As neural progenitors exit mitosis and differentiate into neurons, npBAF complexes which contain ACTL6A/BAF53A and PHF10/BAF45A, are exchanged for homologous alternative ACTL6B/BAF53B and DPF1/BAF45B or DPF3/BAF45C subunits in neuron-specific complexes (nBAF). The npBAF complex is essential for the self-renewal/proliferative capacity of the multipotent neural stem cells. The nBAF complex along with CREST plays a role regulating the activity of genes essential for dendrite growth. Muscle-specific component of the BAF complex, a multiprotein complex involved in transcriptional activation and repression of select genes by chromatin remodeling (alteration of DNA-nucleosome topology). Specifically binds acetylated lysines on histone 3 and 4 (H3K14ac, H3K9ac, H4K5ac, H4K8ac, H4K12ac, H4K16ac). In the complex, it acts as a tissue-specific anchor between histone acetylations and methylations and chromatin remodeling. It thereby probably plays an essential role in heart and skeletal muscle development. Acts as a regulator of myogenesis in cooperation with HDGFL2. Mediates the interaction of HDGFL2 with the BAF complex. HDGFL2-DPF3a activate myogenic genes by increasing chromatin accessibility through recruitment of SMARCA4/BRG1/BAF190A (ATPase subunit of the BAF complex) to myogenic gene promoters. The polypeptide is Zinc finger protein DPF3 (DPF3) (Homo sapiens (Human)).